Reading from the N-terminus, the 213-residue chain is Ferric nitrobindin-like protein (213 aa).

The segment at 17 to 42 (VNLAAEQSKSTSDKNLPEFGDMPIPD) is disordered. The GXWXGXG signature appears at 65 to 71 (GVWRGQG).

It belongs to the nitrobindin family.

The chain is Ferric nitrobindin-like protein from Corynebacterium jeikeium (strain K411).